The sequence spans 188 residues: Elongation factor P (188 aa).

Belongs to the elongation factor P family.

The protein localises to the cytoplasm. Its pathway is protein biosynthesis; polypeptide chain elongation. Involved in peptide bond synthesis. Stimulates efficient translation and peptide-bond synthesis on native or reconstituted 70S ribosomes in vitro. Probably functions indirectly by altering the affinity of the ribosome for aminoacyl-tRNA, thus increasing their reactivity as acceptors for peptidyl transferase. This chain is Elongation factor P, found in Paramagnetospirillum magneticum (strain ATCC 700264 / AMB-1) (Magnetospirillum magneticum).